A 376-amino-acid chain; its full sequence is Adipocyte plasma membrane-associated protein (376 aa).

A helical membrane pass occupies residues 1 to 17 (MTFLMLAVSLAIPLLGA). Residue Asn120 is glycosylated (N-linked (GlcNAc...) asparagine).

The protein belongs to the strictosidine synthase family.

It localises to the membrane. Functionally, exhibits strong arylesterase activity with beta-naphthyl acetate and phenyl acetate. May play a role in adipocyte differentiation. This is Adipocyte plasma membrane-associated protein (Apmap) from Rattus norvegicus (Rat).